We begin with the raw amino-acid sequence, 501 residues long: Dynein regulatory complex subunit 5 (501 aa).

Polar residues predominate over residues 1–23; it reads MQDTVTTSALLDPSHSSVSTQDN. Disordered regions lie at residues 1–56 and 202–222; these read MQDT…HPRA and LPAQ…EMEE. A compositionally biased stretch (low complexity) spans 24 to 34; the sequence is SSTGGHTSSTS. 5 LRR repeats span residues 308–321, 335–355, 363–383, 391–411, and 419–439; these read VLEE…LIGD, RLRV…QSLA, NLIS…QALA, CLTT…TLLS, and TLTS…KQLL.

Belongs to the DRC5 family. As to quaternary structure, component of the nexin-dynein regulatory complex (N-DRC). Interacts with DRC1. Interacts with FBXL13/DRC6, DRC3 and DRC7.

It localises to the cell projection. The protein localises to the cilium. Its subcellular location is the flagellum. The protein resides in the cytoplasm. It is found in the cytoskeleton. It localises to the flagellum axoneme. Functionally, component of the nexin-dynein regulatory complex (N-DRC) a key regulator of ciliary/flagellar motility which maintains the alignment and integrity of the distal axoneme and regulates microtubule sliding in motile axonemes. May play a role in the assembly of N-DRC. May be required for sperm motility. This Homo sapiens (Human) protein is Dynein regulatory complex subunit 5 (TCTE1).